We begin with the raw amino-acid sequence, 361 residues long: tRNA-specific 2-thiouridylase MnmA (361 aa).

Residues 8–15 (GMSGGVDS) and M34 each bind ATP. The tract at residues 94-96 (NPD) is interaction with target base in tRNA. C99 (nucleophile) is an active-site residue. C99 and C195 are disulfide-bonded. Residue G123 participates in ATP binding. Residues 145-147 (KDQ) form an interaction with tRNA region. Catalysis depends on C195, which acts as the Cysteine persulfide intermediate. Positions 307–308 (RY) are interaction with tRNA.

It belongs to the MnmA/TRMU family.

The protein localises to the cytoplasm. The enzyme catalyses S-sulfanyl-L-cysteinyl-[protein] + uridine(34) in tRNA + AH2 + ATP = 2-thiouridine(34) in tRNA + L-cysteinyl-[protein] + A + AMP + diphosphate + H(+). Catalyzes the 2-thiolation of uridine at the wobble position (U34) of tRNA, leading to the formation of s(2)U34. This chain is tRNA-specific 2-thiouridylase MnmA, found in Legionella pneumophila subsp. pneumophila (strain Philadelphia 1 / ATCC 33152 / DSM 7513).